Reading from the N-terminus, the 658-residue chain is Ubiquilin-3 (658 aa).

Positions 22–96 (IRVTVKTPKD…VHLVIKMQRR (75 aa)) constitute a Ubiquitin-like domain. One can recognise an STI1 domain in the interval 194 to 233 (NPHMQHLIQQNPEIGHILNNPEIMRQTMEFLRNPSMMQEM). Residues 280-291 (TATTASTTTTSS) show a composition bias toward low complexity. 2 disordered regions span residues 280-336 (TATT…RNRL) and 362-478 (YLQG…PESP). The span at 312–323 (VSGGRQGRGGRQ) shows a compositional bias: gly residues. 3 stretches are compositionally biased toward polar residues: residues 362–379 (YLQG…SPLS), 389–400 (SSPKSGSGQSLP), and 438–469 (TGPS…SLMS). Residues 614-658 (QLEAHFRVQLEQLRAMGFLNLEANLQALIATEGDVDAAVEKLRKS) enclose the UBA domain.

In terms of tissue distribution, testis-specific (at protein level).

The chain is Ubiquilin-3 (Ubqln3) from Mus musculus (Mouse).